We begin with the raw amino-acid sequence, 486 residues long: Odorant receptor coreceptor (486 aa).

Topologically, residues 1 to 47 (MTTSMQPSKYTGLVADLMPNIRAMKYSGLFMHNFTGGSAFMKKVYSS) are cytoplasmic. The helical transmembrane segment at 48-68 (VHLVFLLMQFTFILVNMALNA) threads the bilayer. Residues 69 to 75 (EEVNELS) lie on the Extracellular side of the membrane. The helical transmembrane segment at 76 to 96 (GNTITTLFFTHCITKFIYLAV) threads the bilayer. At 97 to 135 (NQKNFYRTLNIWNQVNTHPLFAESDARYHSIALAKMRKL) the chain is on the cytoplasmic side. A helical transmembrane segment spans residues 136–156 (FFLVMLTTVASATAWTTITFF). Residues 157–191 (GDSVKMVVDHETNSSIPVEIPRLPIKSFYPWNASH) lie on the Extracellular side of the membrane. N-linked (GlcNAc...) asparagine glycosylation is found at N169 and N188. The chain crosses the membrane as a helical span at residues 192–212 (GMFYMISFAFQIYYVLFSMIH). Residues 213 to 351 (SNLCDVMFCS…VERHKHVVRL (139 aa)) are Cytoplasmic-facing. Residues 352-372 (VAAIGDTYGAALLLHMLTSTI) form a helical membrane-spanning segment. Over 373–390 (KLTLLAYQATKINGVNVY) the chain is Extracellular. Residues 391–411 (AFTVVGYLGYALAQVFHFCIF) traverse the membrane as a helical segment. Over 412–462 (GNRLIEESSSVMEAAYSCHWYDGSEEAKTFVQIVCQQCQKAMSISGAKFFT) the chain is Cytoplasmic. The chain crosses the membrane as a helical span at residues 463–483 (VSLDLFASVLGAVVTYFMVLV). Over 484-486 (QLK) the chain is Extracellular.

The protein belongs to the insect chemoreceptor superfamily. Heteromeric odorant receptor channel (TC 1.A.69) family. Orco subfamily. As to quaternary structure, heterodimer with conventional odorant receptors (ORs). Complexes exist early in the endomembrane system in olfactory sensory neurons (OSNs), coupling these complexes to the conserved ciliary trafficking pathway. In terms of tissue distribution, expression is restricted to olfactory sensory neurons (OSNs). Coexpressed with Snmp in a lateral-distal population of OSNs. Expressed in the embryonic antennal-maxillary complex, in all 21 OSNs of the larval dorsal organ, in the pupal antennal OSNs, in all 120 adult maxillary palp neurons and in approximately 70-80% of adult antennal OSNs, where expression is highest at the dorsal-medial edge. Localized to OSN cell bodies and to the distal portion of ciliated OSN dendrites.

It localises to the cell membrane. Functionally, odorant coreceptor which complexes with conventional odorant receptors (ORs) to form odorant-sensing units, providing sensitive and prolonged odorant signaling and calcium permeability. Orco is a universal and integral part of the functional odorant receptor, involved in the dendritic localization of other olfactory receptors. Expression of Orco alone leads to formation of rapid and transient ion channels not directly responding to odorants, but directly activated by intracellular cAMP or cGMP. Snmp, Or67d and lush act in concert to capture fatty-acid-derived male pheromone 11-cis vaccenyl acetate (cVA) molecules on the surface of Or67d expressing olfactory dendrites and facilitate their transfer to the odorant-receptor Orco complex. This is Odorant receptor coreceptor (Orco) from Drosophila melanogaster (Fruit fly).